Here is a 154-residue protein sequence, read N- to C-terminus: Pseudo histidine-containing phosphotransfer protein 6 (154 aa).

Residue Met-1 is modified to N-acetylmethionine. Residues 41-137 (SPNFVYDVIN…HYLKNMMHEL (97 aa)) form the HPt domain.

Interacts with AHK5.

It localises to the cytoplasm. Its subcellular location is the cytosol. The protein localises to the nucleus. Its function is as follows. Functions as a two-component phosphorelay mediator between cytokinin sensor histidine kinases and response regulators (B-type ARRs). Plays an important role in propagating cytokinin signal transduction. This Arabidopsis thaliana (Mouse-ear cress) protein is Pseudo histidine-containing phosphotransfer protein 6 (AHP6).